A 4383-amino-acid polypeptide reads, in one-letter code: Replicase polyprotein 1a (4383 aa).

One can recognise a CoV Nsp1 globular domain in the interval 54–196 (PENHVMVDCR…PWVMYLRKRG (143 aa)). A BetaCoV Nsp1 C-terminal domain is found at 216 to 246 (FKVEDAYDQVHDEPKGKFSKKAYALIRGYRG). The 265-residue stretch at 250-514 (LLYVDQYGCD…VKETNLICKA (265 aa)) folds into the CoV Nsp2 N-terminal domain. Zn(2+) contacts are provided by C392, C397, C413, and C416. Positions 392–416 (CEQDSCDFKGWIPGNMIDGFACTTC) are C4. The CoV Nsp2 middle domain occupies 524–713 (CGNLHQRELL…AQAFQSVAKV (190 aa)). The CoV Nsp2 C-terminal domain maps to 733–851 (RRRICLSGRK…LDQAWRVPCA (119 aa)). The 114-residue stretch at 853 to 966 (RRVTFKEQPT…LYCAFTAPED (114 aa)) folds into the Ubiquitin-like 1 domain. Positions 995–1025 (PCVASEQEESSEVLEDTLDDGPSVETSDSQV) are disordered. The span at 1000-1013 (EQEESSEVLEDTLD) shows a compositional bias: acidic residues. In terms of domain architecture, Peptidase C16 1 spans 1036-1274 (DLESVIQDYE…IAQLYGSCIT (239 aa)). Catalysis depends on C1074, which acts as the For PL1-PRO activity. C1151, C1154, C1177, and C1179 together coordinate Zn(2+). The C4-type 1 zinc-finger motif lies at 1151–1179 (CIKCDLALKLKGLDAMFFYGDVVSHICKC). Catalysis depends on for PL1-PRO activity residues H1225 and D1236. The region spanning 1275–1435 (PNVCFVKGDI…LISKCQITAV (161 aa)) is the Macro domain. Positions 1491-1563 (DDARTFVQSN…VAQIKALFLD (73 aa)) constitute a DPUP domain. Residues 1562–1617 (LDKVDILLTVDGVNFTNRFVPVGESFGKSLGNVFCDGVNVTKHKCDINYKGKVFFQ) enclose the Ubiquitin-like 2 domain. In terms of domain architecture, Peptidase C16 2 spans 1631–1892 (SSFNFDQKEL…KIEYKPDLSQ (262 aa)). C1671 functions as the For PL2-PRO activity in the catalytic mechanism. Positions 1749, 1751, 1783, and 1785 each coordinate Zn(2+). Residues 1749–1785 (CKCGVKQEQRTGLDAVMHFGTLSREDLEIGYTVDCSC) form a C4-type 2 zinc finger. Catalysis depends on for PL2-PRO activity residues H1828 and D1842. Positions 1906 to 2007 (IKAQFKTFEK…TYFNRPLLVD (102 aa)) constitute a Nucleic acid-binding domain. One can recognise a G2M domain in the interval 2020–2169 (DDSGDSSESG…ADNKVIYTTE (150 aa)). Transmembrane regions (helical) follow at residues 2138-2158 (TSACFNFIKWLFVLLFGWIKI), 2199-2219 (ACIIATIFLLWFNFIYANVIF), and 2221-2241 (DFYLPKIGFLPTFVGKIAQWI). Residues 2138 to 2385 (TSACFNFIKW…ASFIKLFSLF (248 aa)) are HD1. A 3Ecto domain is found at 2235-2296 (GKIAQWIKNT…AIDVVQYEAD (62 aa)). 2 disulfides stabilise this stretch: C2251–C2275 and C2266–C2272. A run of 3 helical transmembrane segments spans residues 2313–2333 (LIVSYALYTAWFYPLFALISI), 2343–2363 (LFMLSTLHWSFRLLVALANML), and 2365–2385 (AHVFMRFYIIIASFIKLFSLF). A Y1 region spans residues 2383 to 2473 (SLFKHVAYGC…ELKRPIQPTD (91 aa)). In terms of domain architecture, CoV Nsp3 Y spans 2383 to 2750 (SLFKHVAYGC…LTTPFSLKGG (368 aa)). The Zn(2+) site is built by H2387, C2392, C2397, C2400, C2433, H2436, C2440, and C2443. The interval 2387 to 2400 (HVAYGCSKSGCLFC) is ZF1. Residues 2433 to 2443 (CSKHQWNCIDC) are ZF2. The interval 2474 to 2566 (VAYHTVTDVK…MVDKNLITTA (93 aa)) is Y2. Positions 2474–2750 (VAYHTVTDVK…LTTPFSLKGG (277 aa)) are coV-Y. Positions 2567–2649 (NTGTSVTETM…DSVMSAVSAG (83 aa)) are Y3. The interval 2650 to 2750 (LELTDESCNN…LTTPFSLKGG (101 aa)) is Y4. The next 7 membrane-spanning stretches (helical) occupy residues 2752 to 2772 (VFSYFVYVCFVLSLVCFIGLW), 2824 to 2844 (STFGLSYYSNSMACPIVVAVI), 3009 to 3029 (VFDLIYQLFKGLAQPVDFLAL), 3031 to 3051 (ASSIAGAILAVIVVLVFYYLI), 3063 to 3083 (VVFVNVIVWCVNFMMLFVFQV), 3090 to 3110 (VYAICYFYATLYFPSEISVIM), and 3115 to 3135 (LVMYGTIMPLWFCLLYIAVVV). Residues 2752-3135 (VFSYFVYVCF…FCLLYIAVVV (384 aa)) form an HD2 region. The region spanning 3149–3246 (LGTSVRSDGT…TASVSTSFLQ (98 aa)) is the Nsp4C domain. Positions 3247 to 3549 (SGIVKMVNPT…YQQLAGIKLQ (303 aa)) constitute a Peptidase C30 domain. Active-site for 3CL-PRO activity residues include H3287 and C3391. The HD3 stretch occupies residues 3319-3775 (LSLTVMSYQM…IISCYWGLFS (457 aa)). Helical transmembrane passes span 3558–3578 (GTVCWIMASTFLFSCIITAFV), 3588–3608 (TNMFSITFCALCVISLAMLLV), 3615–3635 (LTMYITPVLFTLLYNNYLVVY), 3657–3677 (TYTDEVIYGMLLLVGMVFVTL), 3684–3704 (LFSFIMFVGRLISVFSLWYKG), 3711–3731 (ILLMLASLFGTYTWTTVLSMA), and 3755–3775 (IVLLCYLFIGYIISCYWGLFS). Residues 3837-3925 (SKLTDVKCAN…DYAKDNTVLQ (89 aa)) form the RdRp Nsp7 cofactor domain. The 197-residue stretch at 3926 to 4122 (ALQSEFVNMA…YNEVSATVLQ (197 aa)) folds into the RdRp Nsp8 cofactor domain. The 110-residue stretch at 4123–4232 (NNELMPAKLK…GTISSTVRLQ (110 aa)) folds into the Nsp9 ssRNA-binding domain. Residues 4233-4370 (AGTATEYASN…CVSTDTTVQS (138 aa)) enclose the ExoN/MTase coactivator domain. Residues C4306, C4309, H4315, C4322, C4348, C4351, C4359, and C4361 each contribute to the Zn(2+) site. 2 zinc fingers span residues 4306 to 4322 (CIYCRARVEHPDVDGLC) and 4348 to 4361 (CRVCGFWRDGSCSC).

The protein belongs to the coronaviruses polyprotein 1ab family. As to quaternary structure, 3CL-PRO exists as monomer and homodimer. Eight copies of nsp7 and eight copies of nsp8 assemble to form a heterohexadecamer. Nsp9 is a dimer. Nsp10 forms a dodecamer. In terms of processing, specific enzymatic cleavages in vivo by its own proteases yield mature proteins. 3CL-PRO and PL-PRO proteinases are autocatalytically processed.

It localises to the host membrane. Its subcellular location is the host cytoplasm. The protein localises to the host perinuclear region. It catalyses the reaction Thiol-dependent hydrolysis of ester, thioester, amide, peptide and isopeptide bonds formed by the C-terminal Gly of ubiquitin (a 76-residue protein attached to proteins as an intracellular targeting signal).. The catalysed reaction is TSAVLQ-|-SGFRK-NH2 and SGVTFQ-|-GKFKK the two peptides corresponding to the two self-cleavage sites of the SARS 3C-like proteinase are the two most reactive peptide substrates. The enzyme exhibits a strong preference for substrates containing Gln at P1 position and Leu at P2 position.. The enzyme catalyses a 5'-end diphospho-ribonucleoside in mRNA + GTP + H(+) = a 5'-end (5'-triphosphoguanosine)-ribonucleoside in mRNA + diphosphate. Its function is as follows. The papain-like proteinase 1 (PL1-PRO) and papain-like proteinase 2 (PL2-PRO) are responsible for the cleavages located at the N-terminus of the replicase polyprotein. In addition, PLP2 possesses a deubiquitinating/deISGylating activity and processes both 'Lys-48'- and 'Lys-63'-linked polyubiquitin chains from cellular substrates. Antagonizes innate immune induction of type I interferon by blocking the phosphorylation, dimerization and subsequent nuclear translocation of host IRF-3. In terms of biological role, responsible for the majority of cleavages as it cleaves the C-terminus of replicase polyprotein at 11 sites. Recognizes substrates containing the core sequence [ILMVF]-Q-|-[SGACN]. Inhibited by the substrate-analog Cbz-Val-Asn-Ser-Thr-Leu-Gln-CMK. Also contains an ADP-ribose-1''-phosphate (ADRP)-binding function. Nsp7-nsp8 hexadecamer may possibly confer processivity to the polymerase, maybe by binding to dsRNA or by producing primers utilized by the latter. Functionally, catalytic subunit of viral RNA capping enzyme which catalyzes the RNA guanylyltransferase reaction for genomic and sub-genomic RNAs. The kinase-like NiRAN domain of NSP12 transfers RNA to the amino terminus of NSP9, forming a covalent RNA-protein intermediate. Subsequently, the NiRAN domain transfers RNA to GDP, forming the core cap structure GpppA-RNA. The NSP14 and NSP16 methyltransferases then add methyl groups to form functional cap structures. Its function is as follows. Binds to the 40S ribosomal subunit and inhibits host translation. The nsp1-40S ribosome complex further induces an endonucleolytic cleavage near the 5'UTR of host mRNAs, targeting them for degradation. This inhibits the integrated stress response (ISR) in the infected cell by preventing EIF2S1/eIF2-alpha phosphorylation upstream of stress granule formation and depletes host G3BP1. By suppressing host gene expression, nsp1 facilitates efficient viral gene expression in infected cells and evasion from host immune response. This is Replicase polyprotein 1a from Human coronavirus OC43 (HCoV-OC43).